The sequence spans 1269 residues: Rho GTPase-activating protein 29 (1269 aa).

A phosphoserine mark is found at S171, S176, S179, and S190. Residues I192–E462 enclose the F-BAR domain. Residues R296–V418 are a coiled coil. Disordered stretches follow at residues S472–D523 and D540–G599. S499, S519, and S552 each carry phosphoserine. The segment covering D540 to S559 has biased composition (low complexity). The Phorbol-ester/DAG-type zinc finger occupies T612 to C657. Residues A671–F886 enclose the Rho-GAP domain. Residues P909 to K936 form a disordered region. S918 is modified (phosphoserine). A compositionally biased stretch (basic and acidic residues) spans P919 to M928. S954 and S1026 each carry phosphoserine. The disordered stretch occupies residues R1120–V1269. Polar residues predominate over residues S1128–Q1145. 2 positions are modified to phosphoserine: S1152 and S1154. The span at T1162–T1172 shows a compositional bias: polar residues. Residues S1229–P1241 are compositionally biased toward basic and acidic residues. Over residues E1259–V1269 the composition is skewed to acidic residues. Positions P1266–V1269 are interaction with PTPN13/PTPL1.

Interacts with PTPN13/PTPL1. Interacts with RAP2A via its coiled coil domain. Interacts with RASIP1.

Functionally, GTPase activator for the Rho-type GTPases by converting them to an inactive GDP-bound state. Has strong activity toward RHOA, and weaker activity toward RAC1 and CDC42. May act as a specific effector of RAP2A to regulate Rho. In concert with RASIP1, suppresses RhoA signaling and dampens ROCK and MYH9 activities in endothelial cells and plays an essential role in blood vessel tubulogenesis. The sequence is that of Rho GTPase-activating protein 29 (ARHGAP29) from Bos taurus (Bovine).